A 471-amino-acid polypeptide reads, in one-letter code: Heat shock 70 kDa protein 13 (471 aa).

The N-terminal stretch at 1–22 (MAGEMTILGSAVLTLLLAGYLA) is a signal peptide. An N-linked (GlcNAc...) asparagine glycan is attached at Asn184. Positions 316-339 (NDSQKPQNADSKLPEDQLTPGDGH) are disordered.

It belongs to the heat shock protein 70 family. Binds UBQLN2.

The protein resides in the microsome. It is found in the endoplasmic reticulum. In terms of biological role, has peptide-independent ATPase activity. The polypeptide is Heat shock 70 kDa protein 13 (Hspa13) (Rattus norvegicus (Rat)).